We begin with the raw amino-acid sequence, 366 residues long: Transcription factor MYB28 (366 aa).

HTH myb-type domains are found at residues 9–61 and 62–116; these read GEGL…TNYL and KPEI…KKRL. 2 consecutive DNA-binding regions (H-T-H motif) follow at residues 37–61 and 89–112; these read WRDIPQKAGLKRCGKSCRLRWTNYL and WSVIARHLPRRTDNEIKNYWNTHL. The interval 124–170 is disordered; sequence VTHKPLASSSNPTVDENLNSPNASSSDKQYSRSSSMPFLSRPPPSSC. The span at 130 to 146 shows a compositional bias: polar residues; that stretch reads ASSSNPTVDENLNSPNA. The segment covering 147–158 has biased composition (low complexity); the sequence is SSSDKQYSRSSS.

Can form complexes with MYC2, MYC3 or MYC4. Expressed in generative organs, mature leaves and trichomes.

The protein resides in the nucleus. Functionally, major regulator of short-chained aliphatic glucosinolates (GLSs) biosynthesis. Together with MYB29/HAG3 and MYB76/HAG2, promotes aliphatic glucosinolate biosynthesis but represses indolic glucosinolate biosynthesis. Prevents insect performance (e.g. lepidopteran insect Mamestra brassicae and Spodoptera exigua) by promoting glucosinolates. This Arabidopsis thaliana (Mouse-ear cress) protein is Transcription factor MYB28 (MYB28).